A 443-amino-acid chain; its full sequence is UPF0656 protein C926.02 (443 aa).

It belongs to the UPF0656 family.

Its subcellular location is the cytoplasm. It localises to the nucleus. This is UPF0656 protein C926.02 from Schizosaccharomyces pombe (strain 972 / ATCC 24843) (Fission yeast).